Reading from the N-terminus, the 222-residue chain is Germin-like protein subfamily 1 member 14 (222 aa).

The N-terminal stretch at 1-22 (MRFSKSLILITLSALVISFAEA) is a signal peptide. Cys-32 and Cys-49 are disulfide-bonded. The 152-residue stretch at 63-214 (SGLNQAGTTN…AFQLDVNVVK (152 aa)) folds into the Cupin type-1 domain. Asn-78 carries an N-linked (GlcNAc...) asparagine glycan. His-111, His-113, Glu-118, and His-160 together coordinate Mn(2+).

This sequence belongs to the germin family. As to quaternary structure, oligomer (believed to be a pentamer but probably hexamer).

It localises to the secreted. It is found in the extracellular space. Its subcellular location is the apoplast. May play a role in plant defense. Probably has no oxalate oxidase activity even if the active site is conserved. This Arabidopsis thaliana (Mouse-ear cress) protein is Germin-like protein subfamily 1 member 14.